A 449-amino-acid polypeptide reads, in one-letter code: Kynurenine 3-monooxygenase (449 aa).

This sequence belongs to the aromatic-ring hydroxylase family. KMO subfamily. FAD is required as a cofactor.

It carries out the reaction L-kynurenine + NADPH + O2 + H(+) = 3-hydroxy-L-kynurenine + NADP(+) + H2O. The protein operates within cofactor biosynthesis; NAD(+) biosynthesis; quinolinate from L-kynurenine: step 1/3. Its function is as follows. Catalyzes the hydroxylation of L-kynurenine (L-Kyn) to form 3-hydroxy-L-kynurenine (L-3OHKyn). Required for synthesis of quinolinic acid. In Legionella pneumophila (strain Corby), this protein is Kynurenine 3-monooxygenase.